Consider the following 442-residue polypeptide: Interferon-related developmental regulator 2 (442 aa).

A compositionally biased stretch (basic residues) spans 1–15 (MPRARKGNTLRKGGQ). A disordered region spans residues 1–71 (MPRARKGNTL…DVVDEQGQQE (71 aa)). A compositionally biased stretch (polar residues) spans 43 to 56 (TASECPSLLSTTAE).

This sequence belongs to the IFRD family. Associates with ribosomes; promoting ribosome inactivation. Expressed in many tissues including heart, brain, placenta, lung, liver, skeletal muscle, kidney and pancreas.

Its function is as follows. Ribosome-binding protein that acts as an inhibitor of mRNA translation by promoting ribosome inactivation. Associates with the P- and E-sites of the ribosome and inserts a C-terminal helix into the mRNA exit channel to preclude translation. The sequence is that of Interferon-related developmental regulator 2 from Homo sapiens (Human).